The chain runs to 201 residues: Holliday junction branch migration complex subunit RuvA (201 aa).

The segment at 1–63 (MYDYIKGTVT…EDNISLFGFQ (63 aa)) is domain I. A domain II region spans residues 64 to 142 (TTEERYLFKK…DVVASEIVYV (79 aa)). Residues 143 to 153 (APENDMVAGLS) are flexible linker. Residues 153–201 (SPQLEEAVLALEALGYSTRELKKVIPKLAKEADLTSDAYIKLALQLMTK) form a domain III region.

It belongs to the RuvA family. Homotetramer. Forms an RuvA(8)-RuvB(12)-Holliday junction (HJ) complex. HJ DNA is sandwiched between 2 RuvA tetramers; dsDNA enters through RuvA and exits via RuvB. An RuvB hexamer assembles on each DNA strand where it exits the tetramer. Each RuvB hexamer is contacted by two RuvA subunits (via domain III) on 2 adjacent RuvB subunits; this complex drives branch migration. In the full resolvosome a probable DNA-RuvA(4)-RuvB(12)-RuvC(2) complex forms which resolves the HJ.

The protein localises to the cytoplasm. The RuvA-RuvB-RuvC complex processes Holliday junction (HJ) DNA during genetic recombination and DNA repair, while the RuvA-RuvB complex plays an important role in the rescue of blocked DNA replication forks via replication fork reversal (RFR). RuvA specifically binds to HJ cruciform DNA, conferring on it an open structure. The RuvB hexamer acts as an ATP-dependent pump, pulling dsDNA into and through the RuvAB complex. HJ branch migration allows RuvC to scan DNA until it finds its consensus sequence, where it cleaves and resolves the cruciform DNA. In Listeria monocytogenes serovar 1/2a (strain ATCC BAA-679 / EGD-e), this protein is Holliday junction branch migration complex subunit RuvA.